Consider the following 689-residue polypeptide: FAST kinase domain-containing protein 2, mitochondrial (689 aa).

Ser113 and Ser126 each carry phosphoserine. The RAP domain occupies 617 to 674 (VAVLCVPKSVYCLNSCHPRGLMAMKIRHLNVMGFHVILIHNWELKKLKMEDAVTFVRK).

It belongs to the FAST kinase family. Monomer. Found in a complex with GRSF1, DDX28, DHX30 and FASTKD5. Associates with the 16S mitochondrial rRNA (16S mt-rRNA). Forms a regulatory protein-RNA complex, consisting of RCC1L, NGRN, RPUSD3, RPUSD4, TRUB2, FASTKD2 and 16S mt-rRNA. In terms of tissue distribution, ubiquitously expressed. Expression detected in spleen, testis, colon, heart, smooth muscle, kidney, brain, lung, liver, brown and white adipose tissue with highest expression in testis, heart and smooth muscle.

It is found in the mitochondrion matrix. The protein localises to the mitochondrion nucleoid. Functionally, plays an important role in assembly of the mitochondrial large ribosomal subunit. As a component of a functional protein-RNA module, consisting of RCC1L, NGRN, RPUSD3, RPUSD4, TRUB2, FASTKD2 and 16S mitochondrial ribosomal RNA (16S mt-rRNA), controls 16S mt-rRNA abundance and is required for intra-mitochondrial translation. May play a role in mitochondrial apoptosis. This Mus musculus (Mouse) protein is FAST kinase domain-containing protein 2, mitochondrial (Fastkd2).